Here is a 643-residue protein sequence, read N- to C-terminus: Threonine--tRNA ligase (643 aa).

Positions 1 to 61 (MPIITLPDGS…SEDSSLEIIT (61 aa)) constitute a TGS domain. The interval 243 to 534 (DHRRIGKALD…ITEEYAGFFP (292 aa)) is catalytic. Zn(2+) contacts are provided by Cys334, His385, and His511.

Belongs to the class-II aminoacyl-tRNA synthetase family. Homodimer. Zn(2+) is required as a cofactor.

Its subcellular location is the cytoplasm. It carries out the reaction tRNA(Thr) + L-threonine + ATP = L-threonyl-tRNA(Thr) + AMP + diphosphate + H(+). Catalyzes the attachment of threonine to tRNA(Thr) in a two-step reaction: L-threonine is first activated by ATP to form Thr-AMP and then transferred to the acceptor end of tRNA(Thr). Also edits incorrectly charged L-seryl-tRNA(Thr). The protein is Threonine--tRNA ligase of Actinobacillus pleuropneumoniae serotype 7 (strain AP76).